Reading from the N-terminus, the 487-residue chain is Glutamate mutase epsilon subunit (487 aa).

Arginine 62 lines the L-glutamate pocket. Residue glycine 64 participates in adenosylcob(III)alamin binding. Position 96 (arginine 96) interacts with L-glutamate. Asparagine 119 is a binding site for adenosylcob(III)alamin. L-glutamate-binding positions include 145–146 (RH), glutamate 167, and tyrosine 173. Adenosylcob(III)alamin is bound at residue proline 176. Tyrosine 177 serves as a coordination point for L-glutamate. Positions 289, 318, and 322 each coordinate adenosylcob(III)alamin. The interval 465–487 (SDGKLIGRPGGDNSPAGGASDAD) is disordered.

Belongs to the methylaspartate mutase GlmE subunit family. In terms of assembly, heterotetramer composed of 2 epsilon subunits (GlmE) and 2 sigma subunits (GlmS). GlmE exists as a homodimer and GlmS as a monomer. Requires adenosylcob(III)alamin as cofactor.

It catalyses the reaction (2S,3S)-3-methyl-L-aspartate = L-glutamate. Its pathway is amino-acid degradation; L-glutamate degradation via mesaconate pathway; acetate and pyruvate from L-glutamate: step 1/4. Catalyzes the carbon skeleton rearrangement of L-glutamate to L-threo-3-methylaspartate ((2S,3S)-3-methylaspartate). This Haloarcula marismortui (strain ATCC 43049 / DSM 3752 / JCM 8966 / VKM B-1809) (Halobacterium marismortui) protein is Glutamate mutase epsilon subunit.